The chain runs to 475 residues: Ankyrin repeat, SAM and basic leucine zipper domain-containing protein 1 (475 aa).

Positions 1–24 are disordered; sequence MAASALRGPPVAGGGESSESEDDG. A phosphoserine mark is found at S17, S18, and S20. ANK repeat units follow at residues 45–74, 78–107, 110–144, 148–177, 181–210, and 214–243; these read EKKE…SVDS, YGWT…NASF, DKQS…DPNV, RLMT…EVNT, NGYT…NKML, and DGKM…PLEG. The region spanning 272–334 is the SAM domain; that stretch reads SYTAFGDLEV…KILAALKELQ (63 aa).

Interacts with DDX4, PIWIL1, RANBP9 and TDRD1.

It is found in the cytoplasm. Plays a central role during spermatogenesis by repressing transposable elements and preventing their mobilization, which is essential for the germline integrity. Acts via the piRNA metabolic process, which mediates the repression of transposable elements during meiosis by forming complexes composed of piRNAs and Piwi proteins and governs the methylation and subsequent repression of transposons. Its association with pi-bodies suggests a participation in the primary piRNAs metabolic process. Required prior to the pachytene stage to facilitate the production of multiple types of piRNAs, including those associated with repeats involved in the regulation of retrotransposons. May act by mediating protein-protein interactions during germ cell maturation. The protein is Ankyrin repeat, SAM and basic leucine zipper domain-containing protein 1 (ASZ1) of Gorilla gorilla gorilla (Western lowland gorilla).